The following is a 443-amino-acid chain: Threonine/serine transporter TdcC (443 aa).

Helical transmembrane passes span 24–44, 45–65, 95–115, 140–160, 163–183, 207–227, 259–279, 319–339, 363–383, 385–405, and 423–443; these read WVLG…PISA, GIGG…IAFF, VGGV…LWIY, VVAL…KDLM, VMGY…LSLI, ILVT…FSPI, ASVL…FTLS, ASII…LGTL, LNMI…YINP, ILDL…CLLP, and SNYF…YQLM.

Belongs to the amino acid/polyamine transporter 2 family. SdaC/TdcC subfamily.

It is found in the cell inner membrane. The enzyme catalyses L-threonine(in) + H(+)(in) = L-threonine(out) + H(+)(out). It carries out the reaction L-serine(in) + H(+)(in) = L-serine(out) + H(+)(out). In terms of biological role, involved in the import of threonine and serine into the cell, with the concomitant import of a proton (symport system). The polypeptide is Threonine/serine transporter TdcC (Edwardsiella piscicida).